The chain runs to 623 residues: Heterogeneous nuclear ribonucleoprotein L (623 aa).

Over residues M1–L16 the composition is skewed to basic residues. The disordered stretch occupies residues M1–A97. Basic and acidic residues predominate over residues E17–R27. Positions R28–A37 are enriched in low complexity. The span at A38 to G54 shows a compositional bias: gly residues. Glycyl lysine isopeptide (Lys-Gly) (interchain with G-Cter in SUMO2) cross-links involve residues K59 and K62. Residues Q69–E87 show a composition bias toward gly residues. Position 98 is a phosphoserine (S98). Residues P99–S173 form the RRM 1 domain. Residue K133 forms a Glycyl lysine isopeptide (Lys-Gly) (interchain with G-Cter in SUMO2) linkage. Residue S182 is modified to Phosphoserine. Residues S190–P267 enclose the RRM 2 domain. At K266 the chain carries N6-acetyllysine. Positions D281–N298 are enriched in polar residues. The disordered stretch occupies residues D281–A413. Phosphoserine is present on residues S288 and S295. Residue K299 forms a Glycyl lysine isopeptide (Lys-Gly) (interchain with G-Cter in SUMO2) linkage. Asymmetric dimethylarginine occurs at positions 388 and 392. A compositionally biased stretch (pro residues) spans G398–Y409. S415 carries the post-translational modification Phosphoserine. RRM domains are found at residues P416 to Q490 and S498 to K586. Position 578 is a phosphoserine; by CaMK4 (S578). Residue K602 forms a Glycyl lysine isopeptide (Lys-Gly) (interchain with G-Cter in SUMO2) linkage.

As to quaternary structure, identified in a IGF2BP1-dependent mRNP granule complex containing untranslated mRNAs. Interacts with HNRNPLL. Interacts with APEX1; the interaction is DNA-dependent. Component of a complex with SETD2. Interacts with ELAVL1. Part of a transcription inhibitory ribonucleoprotein complex composed at least of the circular RNA circZNF827, ZNF827 and HNRNPK. Interacts with CHD8 in an RNA-dependent manner. Several isoelectric forms of the L protein are probably the results of post-translational modifications. In terms of processing, phosphorylation at Ser-578 by CaMK4 enhances interaction with a CaMK4-responsive RNA element (CaRRE1), and prevents inclusion of the stress axis-regulated exon (STREX) of the KCNMA1 potassium channel transcripts upon membrane depolarization.

The protein resides in the nucleus. It localises to the nucleoplasm. The protein localises to the cytoplasm. Its function is as follows. Splicing factor binding to exonic or intronic sites and acting as either an activator or repressor of exon inclusion. Exhibits a binding preference for CA-rich elements. Component of the heterogeneous nuclear ribonucleoprotein (hnRNP) complexes and associated with most nascent transcripts. Associates, together with APEX1, to the negative calcium responsive element (nCaRE) B2 of the APEX2 promoter. As part of a ribonucleoprotein complex composed at least of ZNF827, HNRNPK and the circular RNA circZNF827 that nucleates the complex on chromatin, may negatively regulate the transcription of genes involved in neuronal differentiation. Regulates alternative splicing of a core group of genes involved in neuronal differentiation, likely by mediating H3K36me3-coupled transcription elongation and co-transcriptional RNA processing via interaction with CHD8. In Rattus norvegicus (Rat), this protein is Heterogeneous nuclear ribonucleoprotein L.